The following is a 267-amino-acid chain: Small ribosomal subunit protein eS4 (267 aa).

One can recognise an S4 RNA-binding domain in the interval 42–104; sequence LPLILVLRNR…TKENFRLLFD (63 aa).

It belongs to the eukaryotic ribosomal protein eS4 family.

It localises to the cytoplasm. The chain is Small ribosomal subunit protein eS4 (rps4) from Dictyostelium discoideum (Social amoeba).